The following is a 512-amino-acid chain: Probable DNA ligase (512 aa).

Glu-208 contacts ATP. Catalysis depends on Lys-210, which acts as the N6-AMP-lysine intermediate. The ATP site is built by Arg-215, Arg-230, Glu-259, Phe-299, Arg-374, and Lys-380.

Belongs to the ATP-dependent DNA ligase family. Requires Mg(2+) as cofactor.

The catalysed reaction is ATP + (deoxyribonucleotide)n-3'-hydroxyl + 5'-phospho-(deoxyribonucleotide)m = (deoxyribonucleotide)n+m + AMP + diphosphate.. Functionally, DNA ligase that seals nicks in double-stranded DNA during DNA replication, DNA recombination and DNA repair. This Streptomyces coelicolor (strain ATCC BAA-471 / A3(2) / M145) protein is Probable DNA ligase.